We begin with the raw amino-acid sequence, 305 residues long: Non-homologous end joining protein Ku (305 aa).

One can recognise a Ku domain in the interval 16–202 (SLVSFGISLI…KVDPEQLSLA (187 aa)). The interval 263–305 (GEENGRKKSVSGAQHRSRRKSKGEQKLKVVRSGSSSDKRRKSA) is disordered.

This sequence belongs to the prokaryotic Ku family. In terms of assembly, homodimer. Interacts with LigD.

Functionally, with LigD forms a non-homologous end joining (NHEJ) DNA repair enzyme, which repairs dsDNA breaks with reduced fidelity. Binds linear dsDNA with 5'- and 3'- overhangs but not closed circular dsDNA nor ssDNA. Recruits and stimulates the ligase activity of LigD. This is Non-homologous end joining protein Ku from Acidobacterium capsulatum (strain ATCC 51196 / DSM 11244 / BCRC 80197 / JCM 7670 / NBRC 15755 / NCIMB 13165 / 161).